Consider the following 212-residue polypeptide: MSARRRGALKDKWKIKKWYEIITPDVFNNVSVGQTPADEAWKLIGRTVDTTLYDITGDFTYVHVHVYLQINKVDEEALKAYTIFKGHELARDYIRSLTRRKSSKIEGIFDVWTKDGYGLRITVDTFTAYRCQTSQKRAIRKIQKEVIEEMVPQMTLDEVINAMLFGDIAEEISNRARKIYPIRRTEIYKSKVLYMPSPEGPIKAVIVPKPPA.

Belongs to the eukaryotic ribosomal protein eS1 family.

The chain is Small ribosomal subunit protein eS1 from Ignicoccus hospitalis (strain KIN4/I / DSM 18386 / JCM 14125).